The chain runs to 339 residues: Sperm acrosome membrane-associated protein 6 (339 aa).

Positions 1–41 (MTSQRSLSSPQTRRPSVMGLISLVGSIVLLFLLIFRASTWA) are cleaved as a signal peptide. The short motif at 42-45 (CLFC) is the CXXC motif element. Cystine bridges form between Cys42/Cys155, Cys45/Cys158, Cys56/Cys70, Cys140/Cys163, Cys144/Cys169, and Cys186/Cys241. Residues 42 to 310 (CLFCFTTYEE…NPQALTLGNL (269 aa)) lie on the Extracellular side of the membrane. A CXXC motif motif is present at residues 155-158 (CSGC). Positions 166–251 (PLDCPVQDML…VILHDQRPLA (86 aa)) constitute an Ig-like domain. Residue Asn258 is glycosylated (N-linked (GlcNAc...) asparagine). A helical transmembrane segment spans residues 311–331 (FLLAATAALGSASVTLLVWLF). Topologically, residues 332 to 339 (FRWYLSGN) are cytoplasmic.

It belongs to the SPACA6 family. As to quaternary structure, forms a complex with IZUMO1 and TMEM81 on spermatocyte cell membrane required for fertilization. Highly expressed in testis. Minor expression also detected in epididymis, seminal vesicle and ovary. Predominantly expressed in testicular germ cells during spermiogenesis. Most abundant in round spermatids and detected at lower levels in elongating spermatids.

The protein localises to the cytoplasmic vesicle. Its subcellular location is the secretory vesicle. It localises to the acrosome membrane. Sperm protein required for fusion of sperm with the egg membrane during fertilization. May regulate the expression of sperm surface protein DCST2. The sequence is that of Sperm acrosome membrane-associated protein 6 from Mus musculus (Mouse).